Here is a 272-residue protein sequence, read N- to C-terminus: Shikimate dehydrogenase (NADP(+)) (272 aa).

Shikimate-binding positions include 14–16 (SKS) and T61. Residue K65 is the Proton acceptor of the active site. E77 contributes to the NADP(+) binding site. 2 residues coordinate shikimate: N86 and D102. NADP(+) is bound by residues 126–130 (GAGGA), 149–154 (NRTVSR), and M213. Y215 lines the shikimate pocket. G237 is a binding site for NADP(+).

The protein belongs to the shikimate dehydrogenase family. In terms of assembly, homodimer.

It catalyses the reaction shikimate + NADP(+) = 3-dehydroshikimate + NADPH + H(+). The protein operates within metabolic intermediate biosynthesis; chorismate biosynthesis; chorismate from D-erythrose 4-phosphate and phosphoenolpyruvate: step 4/7. Functionally, involved in the biosynthesis of the chorismate, which leads to the biosynthesis of aromatic amino acids. Catalyzes the reversible NADPH linked reduction of 3-dehydroshikimate (DHSA) to yield shikimate (SA). This Shigella dysenteriae serotype 1 (strain Sd197) protein is Shikimate dehydrogenase (NADP(+)).